The sequence spans 289 residues: Mitochondrial fission regulator 1-like (289 aa).

Position 27 is a phosphothreonine (Thr-27). 8 positions are modified to phosphoserine: Ser-38, Ser-100, Ser-107, Ser-221, Ser-222, Ser-235, Ser-258, and Ser-270.

Belongs to the MTFR1 family. Post-translationally, phosphorylated by AMPK. Upon stress, phosphorylation by AMPK is sufficient to induce mitochondrial fragmentation.

It is found in the mitochondrion outer membrane. In terms of biological role, mitochondrial protein required for adaptation of miochondrial dynamics to metabolic changes. Regulates mitochondrial morphology at steady state and mediates AMPK-dependent stress-induced mitochondrial fragmentation via the control of OPA1 levels. This chain is Mitochondrial fission regulator 1-like (MTFR1L), found in Bos taurus (Bovine).